Consider the following 448-residue polypeptide: Chromosomal replication initiator protein DnaA (448 aa).

The tract at residues 1 to 73 (MNAQLKQLWT…INAIKLITSK (73 aa)) is domain I, interacts with DnaA modulators. Positions 73–109 (KKYNIEFSITSEEIFNNQQLKPKSSNDNIVVNDEMTS) are domain II. A domain III, AAA+ region region spans residues 110-326 (ILNPKYTFDS…GALIRIVAYS (217 aa)). Glycine 154, glycine 156, lysine 157, and threonine 158 together coordinate ATP. A domain IV, binds dsDNA region spans residues 327-448 (SLTNREISVD…DDLNKKITNN (122 aa)).

The protein belongs to the DnaA family. Oligomerizes as a right-handed, spiral filament on DNA at oriC.

It is found in the cytoplasm. Plays an essential role in the initiation and regulation of chromosomal replication. ATP-DnaA binds to the origin of replication (oriC) to initiate formation of the DNA replication initiation complex once per cell cycle. Binds the DnaA box (a 9 base pair repeat at the origin) and separates the double-stranded (ds)DNA. Forms a right-handed helical filament on oriC DNA; dsDNA binds to the exterior of the filament while single-stranded (ss)DNA is stabiized in the filament's interior. The ATP-DnaA-oriC complex binds and stabilizes one strand of the AT-rich DNA unwinding element (DUE), permitting loading of DNA polymerase. After initiation quickly degrades to an ADP-DnaA complex that is not apt for DNA replication. Binds acidic phospholipids. The sequence is that of Chromosomal replication initiator protein DnaA from Clostridium novyi (strain NT).